We begin with the raw amino-acid sequence, 179 residues long: Replication restart protein DnaT (179 aa).

The disordered stretch occupies residues 156 to 179; sequence GGLPKRDVNTVSEPDSQIPPGFRG.

It belongs to the DnaT family. Homooligomerizes. Interacts with PriB. Component of the replication restart primosome. Primosome assembly occurs via a 'hand-off' mechanism. PriA binds to replication forks, subsequently PriB then DnaT bind; DnaT then displaces ssDNA to generate the helicase loading substrate.

In terms of biological role, involved in the restart of stalled replication forks, which reloads the replicative helicase on sites other than the origin of replication. Can function in multiple replication restart pathways. Displaces ssDNA from a PriB-ssDNA complex. Probably forms a spiral filament on ssDNA. The polypeptide is Replication restart protein DnaT (Escherichia coli O81 (strain ED1a)).